Reading from the N-terminus, the 671-residue chain is cGMP-dependent protein kinase 1 (671 aa).

Ser2 carries the N-acetylserine modification. A coiled-coil region spans residues 2 to 59 (SELEEDFAKILMLKEERIKELEKRLSEKEEEIQELKRKLHKCQSVLPVPSTHIGPRTT). A required for dimerization region spans residues 2–102 (SELEEDFAKI…LIKEAILDND (101 aa)). Residues 9–44 (AKILMLKEERIKELEKRLSEKEEEIQELKRKLHKCQ) are leucine-zipper. Residues 50 to 75 (PSTHIGPRTTRAQGISAEPQTYRSFH) form an autoinhibitory domain region. At Thr59 the chain carries Phosphothreonine; by autocatalysis. Positions 103–220 (FMKNLELSQI…EYMEFLKSVP (118 aa)) are cGMP-binding, high affinity. 3',5'-cyclic GMP is bound by residues 167 to 170 (GELA), 177 to 178 (RT), Arg282, 291 to 294 (GEKA), 301 to 302 (RT), and Tyr336. The tract at residues 221-341 (TFQSLPEEIL…SNKAYEDAEA (121 aa)) is cGMP-binding, low affinity. Residues 360-619 (FNIIDTLGVG…VKDIQKHKWF (260 aa)) enclose the Protein kinase domain. ATP is bound by residues 366 to 374 (LGVGGFGRV) and Lys390. Residue Asp484 is the Proton acceptor of the active site. Phosphothreonine is present on Thr515. The region spanning 620–671 (EGFNWEGLRKGTLTPPIIPSVASPTDTSNFDGFPEDNDEPPPDDNSGWDIDF) is the AGC-kinase C-terminal domain. Positions 635-671 (PIIPSVASPTDTSNFDGFPEDNDEPPPDDNSGWDIDF) are disordered. The segment covering 652 to 661 (FPEDNDEPPP) has biased composition (acidic residues).

It belongs to the protein kinase superfamily. AGC Ser/Thr protein kinase family. cGMP subfamily. In terms of assembly, isoform alpha: parallel homodimer or heterodimer and also heterotetramer. Interacts directly with PPP1R12A. Non-covalent dimer of dimer of PRKG1-PRKG1 and PPP1R12A-PPP1R12A. This interaction targets PRKG1 to stress fibers to mediate smooth muscle cell relaxation and vasodilation in responses to rises in cGMP. Isoform beta: antiparallel homodimer. Part of cGMP kinase signaling complex at least composed of ACTA2/alpha-actin, CNN1/calponin H1, PLN/phospholamban, PRKG1 and ITPR1. Interacts with IRAG1. Forms a stable complex with ITPR1, IRAG1, and isoform beta of PRKG1. Interacts with TRPC7 (via ankyrin repeat domain). Isoform alpha interacts with RGS2. Interacts with GTF2I. In terms of processing, autophosphorylation increases kinase activity. Post-translationally, 65 kDa monomer is produced by proteolytic cleavage.

The protein resides in the cytoplasm. The catalysed reaction is L-seryl-[protein] + ATP = O-phospho-L-seryl-[protein] + ADP + H(+). It catalyses the reaction L-threonyl-[protein] + ATP = O-phospho-L-threonyl-[protein] + ADP + H(+). With respect to regulation, in the absence of cGMP, PRKG1 activity is suppressed by autoinhibitory contacts. Serine/threonine protein kinase that acts as a key mediator of the nitric oxide (NO)/cGMP signaling pathway. GMP binding activates PRKG1, which phosphorylates serines and threonines on many cellular proteins. Numerous protein targets for PRKG1 phosphorylation are implicated in modulating cellular calcium, but the contribution of each of these targets may vary substantially among cell types. Proteins that are phosphorylated by PRKG1 regulate platelet activation and adhesion, smooth muscle contraction, cardiac function, gene expression, feedback of the NO-signaling pathway, and other processes involved in several aspects of the CNS like axon guidance, hippocampal and cerebellar learning, circadian rhythm and nociception. Smooth muscle relaxation is mediated through lowering of intracellular free calcium, by desensitization of contractile proteins to calcium, and by decrease in the contractile state of smooth muscle or in platelet activation. Regulates intracellular calcium levels via several pathways: phosphorylates IRAG1 and inhibits IP3-induced Ca(2+) release from intracellular stores, phosphorylation of KCNMA1 (BKCa) channels decreases intracellular Ca(2+) levels, which leads to increased opening of this channel. PRKG1 phosphorylates the canonical transient receptor potential channel (TRPC) family which inactivates the associated inward calcium current. Another mode of action of NO/cGMP/PKGI signaling involves PKGI-mediated inactivation of the Ras homolog gene family member A (RhoA). Phosphorylation of RHOA by PRKG1 blocks the action of this protein in myriad processes: regulation of RHOA translocation; decreasing contraction; controlling vesicle trafficking, reduction of myosin light chain phosphorylation resulting in vasorelaxation. Activation of PRKG1 by NO signaling also alters gene expression in a number of tissues. In smooth muscle cells, increased cGMP and PRKG1 activity influence expression of smooth muscle-specific contractile proteins, levels of proteins in the NO/cGMP signaling pathway, down-regulation of the matrix proteins osteopontin and thrombospondin-1 to limit smooth muscle cell migration and phenotype. Regulates vasodilator-stimulated phosphoprotein (VASP) functions in platelets and smooth muscle. This chain is cGMP-dependent protein kinase 1 (PRKG1), found in Oryctolagus cuniculus (Rabbit).